A 256-amino-acid polypeptide reads, in one-letter code: Agamous-like MADS-box protein AGL18 (256 aa).

Residues 1-61 enclose the MADS-box domain; the sequence is MGRGRIEIKK…GKIYDFSSVC (61 aa). Residues 94–184 enclose the K-box domain; that stretch reads NEAVLRNDDS…RKQVEMLGRG (91 aa). The disordered stretch occupies residues 179 to 232; that stretch reads EMLGRGSGPKVLNERPQDSSPEADPESSSSEEDENDNEEHHSDTSLQLGLSSTG. Positions 199–215 are enriched in acidic residues; sequence PEADPESSSSEEDENDN. Polar residues predominate over residues 222 to 232; that stretch reads TSLQLGLSSTG.

As to expression, mostly expressed in pollen, roots, flowers and siliques, and to a lower extent, in stems and leaves. Expressed in the endosperm and in developing male and female gametophytes. Also present in seedlings.

It is found in the nucleus. Its function is as follows. Probable transcription factor involved in the negative regulation of flowering, probably through the photoperiodic pathway. Prevents premature flowering. Downstream regulator of a subset of the MIKC* MADS-controlled genes required during pollen maturation. The chain is Agamous-like MADS-box protein AGL18 (AGL18) from Arabidopsis thaliana (Mouse-ear cress).